The chain runs to 275 residues: Ribosomal RNA small subunit methyltransferase A (275 aa).

S-adenosyl-L-methionine is bound by residues N28, L30, G55, E77, D103, and N123.

The protein belongs to the class I-like SAM-binding methyltransferase superfamily. rRNA adenine N(6)-methyltransferase family. RsmA subfamily.

It localises to the cytoplasm. It carries out the reaction adenosine(1518)/adenosine(1519) in 16S rRNA + 4 S-adenosyl-L-methionine = N(6)-dimethyladenosine(1518)/N(6)-dimethyladenosine(1519) in 16S rRNA + 4 S-adenosyl-L-homocysteine + 4 H(+). Specifically dimethylates two adjacent adenosines (A1518 and A1519) in the loop of a conserved hairpin near the 3'-end of 16S rRNA in the 30S particle. May play a critical role in biogenesis of 30S subunits. This is Ribosomal RNA small subunit methyltransferase A from Rhizobium etli (strain ATCC 51251 / DSM 11541 / JCM 21823 / NBRC 15573 / CFN 42).